An 82-amino-acid polypeptide reads, in one-letter code: Cobrotoxin-b (82 aa).

An N-terminal signal peptide occupies residues 1-21 (MKTLLLTLLVVTIVCLDLGYT). Cystine bridges form between C24-C44, C38-C61, C63-C74, and C75-C80.

Belongs to the three-finger toxin family. Short-chain subfamily. Type I alpha-neurotoxin sub-subfamily. In terms of tissue distribution, expressed by the venom gland.

The protein localises to the secreted. In terms of biological role, binds to muscle nicotinic acetylcholine receptor (nAChR) and inhibit acetylcholine from binding to the receptor, thereby impairing neuromuscular transmission. Produces peripheral paralysis by blocking neuromuscular transmission at the postsynaptic site. Has a lower toxicity than cobrotoxin. In Naja atra (Chinese cobra), this protein is Cobrotoxin-b.